Consider the following 283-residue polypeptide: ATP phosphoribosyltransferase (283 aa).

This sequence belongs to the ATP phosphoribosyltransferase family. Long subfamily. It depends on Mg(2+) as a cofactor.

Its subcellular location is the cytoplasm. The catalysed reaction is 1-(5-phospho-beta-D-ribosyl)-ATP + diphosphate = 5-phospho-alpha-D-ribose 1-diphosphate + ATP. The protein operates within amino-acid biosynthesis; L-histidine biosynthesis; L-histidine from 5-phospho-alpha-D-ribose 1-diphosphate: step 1/9. Its activity is regulated as follows. Feedback inhibited by histidine. Functionally, catalyzes the condensation of ATP and 5-phosphoribose 1-diphosphate to form N'-(5'-phosphoribosyl)-ATP (PR-ATP). Has a crucial role in the pathway because the rate of histidine biosynthesis seems to be controlled primarily by regulation of HisG enzymatic activity. The chain is ATP phosphoribosyltransferase from Nocardia farcinica (strain IFM 10152).